Here is a 238-residue protein sequence, read N- to C-terminus: tRNA (guanine-N(7)-)-methyltransferase (238 aa).

The S-adenosyl-L-methionine site is built by E68, E93, D120, and D143. D143 is a catalytic residue. Substrate-binding positions include K147, D179, and 216-219 (TKFE).

Belongs to the class I-like SAM-binding methyltransferase superfamily. TrmB family.

The catalysed reaction is guanosine(46) in tRNA + S-adenosyl-L-methionine = N(7)-methylguanosine(46) in tRNA + S-adenosyl-L-homocysteine. It functions in the pathway tRNA modification; N(7)-methylguanine-tRNA biosynthesis. Functionally, catalyzes the formation of N(7)-methylguanine at position 46 (m7G46) in tRNA. The chain is tRNA (guanine-N(7)-)-methyltransferase from Shewanella baltica (strain OS195).